Consider the following 183-residue polypeptide: Probable actin-related protein 2/3 complex subunit 3 (183 aa).

The protein belongs to the ARPC3 family. As to quaternary structure, component of the Arp2/3 complex.

The protein resides in the cytoplasm. Its subcellular location is the cytoskeleton. Functionally, functions as a component of the Arp2/3 complex which is involved in regulation of actin polymerization and together with an activating nucleation-promoting factor (NPF) mediates the formation of branched actin networks. In Caenorhabditis elegans, this protein is Probable actin-related protein 2/3 complex subunit 3 (arx-5).